Here is a 203-residue protein sequence, read N- to C-terminus: MDRVVLMLSVLSLGVSSQPITDGQRLFSIAVSRVQHLHLLAQRLFSDFESSLQTEEQLKLNKIFPDFCNSDYIISPIDKHETQRSSVLKLLSISYRLVESWEFPSRSLSGGSAPRNQISPKLSELKMGIHLLIRANEDGAEIFPDSSALQLAPYGNYYQSLGADESLRRTYELLACFKKDMHKVETYLTVAKCRLSPEANCTL.

The first 17 residues, 1-17 (MDRVVLMLSVLSLGVSS), serve as a signal peptide directing secretion. Position 18 is a pyrrolidone carboxylic acid (glutamine 18). Histidine 36 provides a ligand contact to Zn(2+). A disulfide bridge connects residues cysteine 68 and cysteine 176. Glutamate 185 serves as a coordination point for Zn(2+). A disulfide bridge connects residues cysteine 193 and cysteine 201.

The protein belongs to the somatotropin/prolactin family.

Its subcellular location is the secreted. Functionally, growth hormone plays an important role in growth control and is involved in the regulation of several anabolic processes. Implicated as an osmoregulatory substance important for seawater adaptation. In Pagrus major (Red sea bream), this protein is Somatotropin (gh).